The primary structure comprises 989 residues: DEAD-box ATP-dependent RNA helicase 45 (989 aa).

2 stretches are compositionally biased toward basic and acidic residues: residues 1 to 39 (MLEKSKSRKENDRKDRDRSKKENGRRDTTEMRSRVKRCD) and 64 to 101 (RDSKRRGEDKGRGRRERDRDRGKYLKRDRERREREKEK). Disordered regions lie at residues 1–248 (MLEK…AADE) and 305–330 (QGEDSDSDYSEPKSDDDPSLDEDDEE). A coiled-coil region spans residues 88 to 182 (LKRDRERRER…ELKRQNEEAQ (95 aa)). A Phosphoserine modification is found at Ser-119. Positions 134-179 (SRHGDDDVEKKTRDEQVEDEQKQLAEEVEKRRRRVQEWQELKRQNE) are enriched in basic and acidic residues. Ser-200 carries the post-translational modification Phosphoserine. Positions 203-222 (EVKSDSEMDVDRDTKLENGG) are enriched in basic and acidic residues. Residues 230-239 (ENETAVTVSE) are compositionally biased toward polar residues. The segment covering 321 to 330 (DPSLDEDDEE) has biased composition (acidic residues). The Q motif signature appears at 396–424 (QFWHQTGLTSKILDTLKKLNYEKPMPIQA). One can recognise a Helicase ATP-binding domain in the interval 427–605 (LPIIMSGRDC…RKVLNKPVEI (179 aa)). 440–447 (AKTGSGKT) provides a ligand contact to ATP. The short motif at 553–556 (DEAD) is the DEAD box element. Positions 590–748 (QVETLARKVL…PVPDDVKAVA (159 aa)) constitute a Helicase C-terminal domain.

The protein belongs to the DEAD box helicase family. DDX46/PRP5 subfamily.

It carries out the reaction ATP + H2O = ADP + phosphate + H(+). The sequence is that of DEAD-box ATP-dependent RNA helicase 45 (RH45) from Arabidopsis thaliana (Mouse-ear cress).